The chain runs to 639 residues: MAU2 chromatid cohesion factor homolog (639 aa).

2 TPR repeats span residues 453–486 and 493–526; these read GGFY…ANAE and SCSL…ASKI.

Belongs to the SCC4/mau-2 family. In terms of assembly, interacts with Nipped-B to form the cohesin loading complex.

The protein resides in the nucleus. The protein localises to the nucleoplasm. Its function is as follows. Required for association of the cohesin complex with chromatin during interphase. Plays a role in sister chromatid cohesion and normal progression through prometaphase. In Drosophila ananassae (Fruit fly), this protein is MAU2 chromatid cohesion factor homolog.